Here is a 240-residue protein sequence, read N- to C-terminus: Small ribosomal subunit protein uS2 (240 aa).

It belongs to the universal ribosomal protein uS2 family.

This is Small ribosomal subunit protein uS2 from Haemophilus influenzae (strain 86-028NP).